A 445-amino-acid polypeptide reads, in one-letter code: Putrescine hydroxycinnamoyltransferase 1 (445 aa).

Residues histidine 154 and aspartate 388 each act as proton acceptor in the active site.

The protein belongs to the plant acyltransferase family. Expressed in leaves.

In terms of biological role, hydroxycinnamoyl transferase that catalyzes the transfer of an acyl from p-coumaryol-CoA to putrescine, to produce coumaroyl putrescine. The protein is Putrescine hydroxycinnamoyltransferase 1 of Oryza sativa subsp. japonica (Rice).